Consider the following 957-residue polypeptide: Ribonuclease 3-like protein 3 (957 aa).

One can recognise an RNase III 1 domain in the interval 4 to 142 (VEAVEKILNY…IAATVFIDVN (139 aa)). One can recognise a DRBM 1 domain in the interval 307-382 (NGRGELIEIC…AYHMIRALES (76 aa)). An RNase III 2 domain is found at 415–551 (VEAVEKILNY…VAGAVYIDVK (137 aa)). DRBM domains are found at residues 566 to 645 (EPIY…KLSE) and 837 to 912 (DEKG…ALES).

In terms of biological role, ribonuclease that cleaves double-stranded RNA (dsRNA). The protein is Ribonuclease 3-like protein 3 (RTL3) of Arabidopsis thaliana (Mouse-ear cress).